Here is a 286-residue protein sequence, read N- to C-terminus: GTP-binding protein 8 (286 aa).

Positions 105–278 (KQPEVCFMGR…RCFIAHVTGK (174 aa)) constitute an EngB-type G domain. GTP contacts are provided by residues 113-120 (GRSNVGKS), 142-146 (GHTKK), 160-163 (DMPG), 222-225 (TKID), and 257-259 (VSS). Ser120 and Thr144 together coordinate Mg(2+).

This sequence belongs to the TRAFAC class TrmE-Era-EngA-EngB-Septin-like GTPase superfamily. EngB GTPase family. Mg(2+) serves as cofactor.

The sequence is that of GTP-binding protein 8 (gtpbp8) from Danio rerio (Zebrafish).